A 335-amino-acid chain; its full sequence is Deoxyhypusine hydroxylase (335 aa).

5 HEAT-like PBS-type repeats span residues 71 to 97 (LKHE…VVKD), 104 to 130 (CRHE…LRDN), 200 to 233 (QRYR…GLKD), 238 to 264 (FRHE…ALSD), and 271 to 298 (VRHE…FLND). Fe cation contacts are provided by histidine 73, glutamate 74, histidine 106, and glutamate 107. Histidine 240, glutamate 241, histidine 273, and glutamate 274 together coordinate Fe cation.

It belongs to the deoxyhypusine hydroxylase family. The cofactor is Fe(2+).

The protein resides in the cytoplasm. It localises to the nucleus. The catalysed reaction is [eIF5A protein]-deoxyhypusine + AH2 + O2 = [eIF5A protein]-hypusine + A + H2O. The protein operates within protein modification; eIF5A hypusination. Catalyzes the hydroxylation of the N(6)-(4-aminobutyl)-L-lysine intermediate to form hypusine, an essential post-translational modification only found in mature eIF-5A factor. The polypeptide is Deoxyhypusine hydroxylase (lia1) (Aspergillus clavatus (strain ATCC 1007 / CBS 513.65 / DSM 816 / NCTC 3887 / NRRL 1 / QM 1276 / 107)).